The chain runs to 179 residues: Cytochrome b6-f complex iron-sulfur subunit (179 aa).

The chain crosses the membrane as a helical span at residues 21–43 (LLTFGTVTGVALGALYPVVKYFI). The Rieske domain occupies 61–162 (GNDVSLSKFL…ANTVDDKIIL (102 aa)). [2Fe-2S] cluster contacts are provided by cysteine 108, histidine 110, cysteine 126, and histidine 129. Cysteine 113 and cysteine 128 form a disulfide bridge.

Belongs to the Rieske iron-sulfur protein family. The 4 large subunits of the cytochrome b6-f complex are cytochrome b6, subunit IV (17 kDa polypeptide, PetD), cytochrome f and the Rieske protein, while the 4 small subunits are PetG, PetL, PetM and PetN. The complex functions as a dimer. [2Fe-2S] cluster serves as cofactor.

The protein localises to the cellular thylakoid membrane. The catalysed reaction is 2 oxidized [plastocyanin] + a plastoquinol + 2 H(+)(in) = 2 reduced [plastocyanin] + a plastoquinone + 4 H(+)(out). Component of the cytochrome b6-f complex, which mediates electron transfer between photosystem II (PSII) and photosystem I (PSI), cyclic electron flow around PSI, and state transitions. This chain is Cytochrome b6-f complex iron-sulfur subunit, found in Desmonostoc sp. (strain PCC 7906) (Nostoc sp. (strain PCC 7906)).